The following is a 369-amino-acid chain: Anthranilate phosphoribosyltransferase (369 aa).

5-phospho-alpha-D-ribose 1-diphosphate-binding positions include Gly-99, 102–103, 109–112, 127–135, and Ser-139; these read GD, NVST, and KHGNRGVSS. Gly-99 is an anthranilate binding site. Residue Ser-111 participates in Mg(2+) binding. Asn-130 contacts anthranilate. Arg-185 is an anthranilate binding site. Mg(2+) is bound by residues Asp-244 and Glu-245.

This sequence belongs to the anthranilate phosphoribosyltransferase family. In terms of assembly, homodimer. Mg(2+) is required as a cofactor.

The enzyme catalyses N-(5-phospho-beta-D-ribosyl)anthranilate + diphosphate = 5-phospho-alpha-D-ribose 1-diphosphate + anthranilate. Its pathway is amino-acid biosynthesis; L-tryptophan biosynthesis; L-tryptophan from chorismate: step 2/5. In terms of biological role, catalyzes the transfer of the phosphoribosyl group of 5-phosphorylribose-1-pyrophosphate (PRPP) to anthranilate to yield N-(5'-phosphoribosyl)-anthranilate (PRA). The chain is Anthranilate phosphoribosyltransferase from Psychrobacter sp. (strain PRwf-1).